Here is a 219-residue protein sequence, read N- to C-terminus: uncharacterized protein (219 aa).

At 1-15 (MLKLTTTSVTFHVLR) the chain is on the cytoplasmic side. The helical transmembrane segment at 16–36 (YFQLGLSVTNLLLASFAIITN) threads the bilayer. Over 37-41 (YKVDR) the chain is Vacuolar. A helical transmembrane segment spans residues 42–62 (ILRLSLAVSIISSVYFGIVRF). A topological domain (cytoplasmic) is located at residue Leu63. The helical transmembrane segment at 64-84 (PVLLIFVMEIVQTVLWFTAFV) threads the bilayer. Residues 85 to 116 (TLASKFGSMSCSSMPRGINFDYSGSCKIAKID) are Vacuolar-facing. The chain crosses the membrane as a helical span at residues 117-137 (ILPEAVLFILFLATTYASYIT). At 138 to 219 (VLSQAKENGS…VIDGSIEHSS (82 aa)) the chain is on the cytoplasmic side. Positions 176–219 (PLLDLEVQEDARTETESIEDSTDSEDNANIEQEKVIDGSIEHSS) are disordered. Residues 191-203 (ESIEDSTDSEDNA) show a composition bias toward acidic residues. Residues 206–219 (EQEKVIDGSIEHSS) are compositionally biased toward basic and acidic residues.

Its subcellular location is the vacuole membrane. This is an uncharacterized protein from Saccharomyces cerevisiae (strain ATCC 204508 / S288c) (Baker's yeast).